Reading from the N-terminus, the 234-residue chain is Phosphoribosylaminoimidazole-succinocarboxamide synthase (234 aa).

It belongs to the SAICAR synthetase family.

The enzyme catalyses 5-amino-1-(5-phospho-D-ribosyl)imidazole-4-carboxylate + L-aspartate + ATP = (2S)-2-[5-amino-1-(5-phospho-beta-D-ribosyl)imidazole-4-carboxamido]succinate + ADP + phosphate + 2 H(+). It functions in the pathway purine metabolism; IMP biosynthesis via de novo pathway; 5-amino-1-(5-phospho-D-ribosyl)imidazole-4-carboxamide from 5-amino-1-(5-phospho-D-ribosyl)imidazole-4-carboxylate: step 1/2. The polypeptide is Phosphoribosylaminoimidazole-succinocarboxamide synthase (Pyrococcus furiosus (strain ATCC 43587 / DSM 3638 / JCM 8422 / Vc1)).